The sequence spans 136 residues: Large ribosomal subunit protein uL16 (136 aa).

The protein belongs to the universal ribosomal protein uL16 family. In terms of assembly, part of the 50S ribosomal subunit.

Binds 23S rRNA and is also seen to make contacts with the A and possibly P site tRNAs. The protein is Large ribosomal subunit protein uL16 of Rickettsia rickettsii (strain Iowa).